A 370-amino-acid chain; its full sequence is tRNA-specific 2-thiouridylase MnmA (370 aa).

Residues Gly-9–Ser-16 and Met-35 contribute to the ATP site. The interval Asn-107–Asp-109 is interaction with target base in tRNA. Cys-112 acts as the Nucleophile in catalysis. An intrachain disulfide couples Cys-112 to Cys-209. Gly-137 contributes to the ATP binding site. Residues Lys-159–Gln-161 are interaction with tRNA. Residue Cys-209 is the Cysteine persulfide intermediate of the active site.

It belongs to the MnmA/TRMU family.

It is found in the cytoplasm. It carries out the reaction S-sulfanyl-L-cysteinyl-[protein] + uridine(34) in tRNA + AH2 + ATP = 2-thiouridine(34) in tRNA + L-cysteinyl-[protein] + A + AMP + diphosphate + H(+). Catalyzes the 2-thiolation of uridine at the wobble position (U34) of tRNA, leading to the formation of s(2)U34. In Mycoplasma pneumoniae (strain ATCC 29342 / M129 / Subtype 1) (Mycoplasmoides pneumoniae), this protein is tRNA-specific 2-thiouridylase MnmA.